The primary structure comprises 152 residues: UPF0266 membrane protein YobD (152 aa).

3 consecutive transmembrane segments (helical) span residues 6 to 26, 45 to 65, and 67 to 87; these read LVLI…QFIM, IDSV…VTNH, and AQIT…IFWI.

The protein belongs to the UPF0266 family.

The protein resides in the cell inner membrane. This is UPF0266 membrane protein YobD from Escherichia fergusonii (strain ATCC 35469 / DSM 13698 / CCUG 18766 / IAM 14443 / JCM 21226 / LMG 7866 / NBRC 102419 / NCTC 12128 / CDC 0568-73).